We begin with the raw amino-acid sequence, 538 residues long: Tryptophan 7-halogenase PrnA (538 aa).

Residues G13, T15, A16, S39, I42, I45, E49, and A50 each contribute to the FAD site. Residue K79 is part of the active site. Position 79 (K79) interacts with 7-chloro-L-tryptophan. Residues V187 and L337 each contribute to the FAD site. E346 lines the 7-chloro-L-tryptophan pocket. E346 is an L-tryptophan binding site. Chloride-binding residues include T348 and G349. Position 350 (I350) interacts with FAD. 4 residues coordinate 7-chloro-L-tryptophan: Y443, Y444, E450, and F454. Y443, Y444, E450, and F454 together coordinate L-tryptophan.

Belongs to the flavin-dependent halogenase family. Bacterial tryptophan halogenase subfamily. As to quaternary structure, homodimer.

It catalyses the reaction L-tryptophan + FADH2 + chloride + O2 = 7-chloro-L-tryptophan + FAD + 2 H2O. The protein operates within antibiotic biosynthesis. Its function is as follows. Involved in the biosynthesis of the antifungal antibiotic pyrrolnitrin. Catalyzes the chlorination of tryptophan (Trp) at C7 position to yield 7-chloro-L-tryptophan (7-CLT). This Pseudomonas fluorescens protein is Tryptophan 7-halogenase PrnA.